The primary structure comprises 496 residues: MDCYRTSLSSSWIYPTVILCLFGFFSMMRPSEPFLIPYLSGPDKNLTSAEITNEIFPVWTYSYLVLLLPVFVLTDYVRYKPVIILQGISFIITWLLLLFGQGVKTMQVVEFFYGMVTAAEVAYYAYIYSVVSPEHYQRVSGYCRSVTLAAYTAGSVLAQLLVSLANMSYFYLNVISLASVSVAFLFSLFLPMPKKSMFFHAKPSREIKKSSSVNPVLEETHEGEAPGCEEQKPTSEILSTSGKLNKGQLNSLKPSNVTVDVFVQWFQDLKECYSSKRLFYWSLWWAFATAGFNQVLNYVQILWDYKAPSQDSSIYNGAVEAIATFGGAVAAFAVGYVKVNWDLLGELALVVFSVVNAGSLFLMHYTANIWACYAGYLIFKSSYMLLITIAVFQIAVNLNVERYALVFGINTFIALVIQTIMTVIVVDQRGLNLPVSIQFLVYGSYFAVIAGIFLMRSMYITYSTKSQKDVQSPAPSENPDVSHPEEESNIIMSTKL.

The Cytoplasmic portion of the chain corresponds to 1–7; that stretch reads MDCYRTS. Residues 8 to 28 traverse the membrane as a helical segment; the sequence is LSSSWIYPTVILCLFGFFSMM. Topologically, residues 29 to 53 are extracellular; it reads RPSEPFLIPYLSGPDKNLTSAEITN. Residue N45 is glycosylated (N-linked (GlcNAc...) asparagine). Residues 54-74 form a helical membrane-spanning segment; sequence EIFPVWTYSYLVLLLPVFVLT. Topologically, residues 75–81 are cytoplasmic; the sequence is DYVRYKP. The helical transmembrane segment at 82–102 threads the bilayer; the sequence is VIILQGISFIITWLLLLFGQG. Residues 103–110 are Extracellular-facing; it reads VKTMQVVE. Residues 111–131 form a helical membrane-spanning segment; it reads FFYGMVTAAEVAYYAYIYSVV. Over 132–144 the chain is Cytoplasmic; the sequence is SPEHYQRVSGYCR. The helical transmembrane segment at 145–165 threads the bilayer; the sequence is SVTLAAYTAGSVLAQLLVSLA. N166 carries an N-linked (GlcNAc...) asparagine glycan. At 166 to 169 the chain is on the extracellular side; that stretch reads NMSY. The chain crosses the membrane as a helical span at residues 170-190; it reads FYLNVISLASVSVAFLFSLFL. The Cytoplasmic portion of the chain corresponds to 191-282; sequence PMPKKSMFFH…YSSKRLFYWS (92 aa). A helical membrane pass occupies residues 283 to 303; the sequence is LWWAFATAGFNQVLNYVQILW. The Extracellular segment spans residues 304–316; that stretch reads DYKAPSQDSSIYN. Residues 317 to 337 form a helical membrane-spanning segment; the sequence is GAVEAIATFGGAVAAFAVGYV. Over 338-342 the chain is Cytoplasmic; that stretch reads KVNWD. Residues 343 to 363 traverse the membrane as a helical segment; the sequence is LLGELALVVFSVVNAGSLFLM. Over 364–375 the chain is Extracellular; that stretch reads HYTANIWACYAG. Residues 376 to 396 form a helical membrane-spanning segment; that stretch reads YLIFKSSYMLLITIAVFQIAV. Residues 397-405 lie on the Cytoplasmic side of the membrane; it reads NLNVERYAL. Residues 406–426 traverse the membrane as a helical segment; sequence VFGINTFIALVIQTIMTVIVV. Residues 427 to 434 are Extracellular-facing; that stretch reads DQRGLNLP. Residues 435–455 form a helical membrane-spanning segment; the sequence is VSIQFLVYGSYFAVIAGIFLM. At 456-496 the chain is on the cytoplasmic side; sequence RSMYITYSTKSQKDVQSPAPSENPDVSHPEEESNIIMSTKL. The tract at residues 468 to 496 is disordered; it reads KDVQSPAPSENPDVSHPEEESNIIMSTKL.

This sequence belongs to the reduced folate carrier (RFC) transporter (TC 2.A.48) family. As to expression, widely expressed but most abundant in placenta, kidney and liver.

It localises to the membrane. The catalysed reaction is thiamine(out) + H(+)(in) = thiamine(in) + H(+)(out). It carries out the reaction pyridoxine(out) + n H(+)(out) = pyridoxine(in) + n H(+)(in). Its activity is regulated as follows. Pyridoxine transport is inhibited by carbonyl cyanide p-trifluoromethoxyphenylhydrazone (FCCP) and carbonyl cyanide m-chlorophenylhydrazone (CCCP). Its function is as follows. Mediates high affinity thiamine uptake, probably via a proton anti-port mechanism. Has no folate transport activity. Mediates H(+)-dependent pyridoxine transport. In Homo sapiens (Human), this protein is Thiamine transporter 2 (SLC19A3).